Reading from the N-terminus, the 719-residue chain is Putative RNA-binding protein involved in heterochromatin assembly (719 aa).

The RRM domain maps to 226–322; that stretch reads KILYMNNLPP…NLANTKQPRV (97 aa). Ser-345 carries the phosphoserine modification. A RanBP2-type 1 zinc finger spans residues 355 to 384; sequence RPGDWNCPSCGFSNFQRRTACFRCSFPAPS. A disordered region spans residues 389-415; it reads HTANSNNNVNSSRNNLNNRVNSGSSSN. The span at 392 to 415 shows a compositional bias: low complexity; that stretch reads NSNNNVNSSRNNLNNRVNSGSSSN. Ser-455 carries the phosphoserine modification. A disordered region spans residues 511-561; that stretch reads NNNINGNGNGNGNNSNNNNNHNNNHNNNHHNGSINSNSNTNNNNNNNNGNN. Residues 581-610 form a RanBP2-type 2 zinc finger; the sequence is RAGDWKCSTCTYHNFAKNVVCLRCGGPKSI. The segment covering 622-649 has biased composition (polar residues); that stretch reads DSSTFGPASRTPSNNNISVNTNGGSNAG. Positions 622–661 are disordered; that stretch reads DSSTFGPASRTPSNNNISVNTNGGSNAGRTDGNDNKGRDI. A Phosphoserine modification is found at Ser-630. The segment covering 652–661 has biased composition (basic and acidic residues); the sequence is DGNDNKGRDI.

It is found in the chromosome. Its subcellular location is the nucleus. May play a role in chromatin organization. The protein is Putative RNA-binding protein involved in heterochromatin assembly of Saccharomyces cerevisiae (strain ATCC 204508 / S288c) (Baker's yeast).